Reading from the N-terminus, the 357-residue chain is Protein FAM118A (357 aa).

Methionine 1 is modified (N-acetylmethionine). The chain crosses the membrane as a helical span at residues 30 to 50; the sequence is LLLVIGTGVSAAVAPGIPALC. Position 311 is a phosphoserine (serine 311).

Belongs to the FAM118 family.

The protein localises to the membrane. The chain is Protein FAM118A (FAM118A) from Homo sapiens (Human).